Reading from the N-terminus, the 54-residue chain is ATP synthase F(0) complex subunit 8 (54 aa).

A helical transmembrane segment spans residues 9 to 25 (WVFLFFLVWLVLGFLGL).

It belongs to the ATPase protein 8 family. As to quaternary structure, component of the ATP synthase complex composed at least of ATP5F1A/subunit alpha, ATP5F1B/subunit beta, ATP5MC1/subunit c (homooctomer), MT-ATP6/subunit a, MT-ATP8/subunit 8, ATP5ME/subunit e, ATP5MF/subunit f, ATP5MG/subunit g, ATP5MK/subunit k, ATP5MJ/subunit j, ATP5F1C/subunit gamma, ATP5F1D/subunit delta, ATP5F1E/subunit epsilon, ATP5PF/subunit F6, ATP5PB/subunit b, ATP5PD/subunit d, ATP5PO/subunit OSCP. ATP synthase complex consists of a soluble F(1) head domain (subunits alpha(3) and beta(3)) - the catalytic core - and a membrane F(0) domain - the membrane proton channel (subunits c, a, 8, e, f, g, k and j). These two domains are linked by a central stalk (subunits gamma, delta, and epsilon) rotating inside the F1 region and a stationary peripheral stalk (subunits F6, b, d, and OSCP).

It localises to the mitochondrion membrane. Functionally, subunit 8, of the mitochondrial membrane ATP synthase complex (F(1)F(0) ATP synthase or Complex V) that produces ATP from ADP in the presence of a proton gradient across the membrane which is generated by electron transport complexes of the respiratory chain. ATP synthase complex consist of a soluble F(1) head domain - the catalytic core - and a membrane F(1) domain - the membrane proton channel. These two domains are linked by a central stalk rotating inside the F(1) region and a stationary peripheral stalk. During catalysis, ATP synthesis in the catalytic domain of F(1) is coupled via a rotary mechanism of the central stalk subunits to proton translocation. In vivo, can only synthesize ATP although its ATP hydrolase activity can be activated artificially in vitro. Part of the complex F(0) domain. This chain is ATP synthase F(0) complex subunit 8, found in Branchiostoma lanceolatum (Common lancelet).